Here is a 518-residue protein sequence, read N- to C-terminus: DNA-(apurinic or apyrimidinic site) endonuclease 2 (518 aa).

Mg(2+) is bound by residues asparagine 8 and glutamate 48. The active site involves tyrosine 156. The Mg(2+) site is built by aspartate 197, asparagine 199, aspartate 303, and histidine 304. Aspartate 197 serves as the catalytic Proton donor/acceptor. The active-site Proton acceptor is the histidine 304. The span at 355–405 (STLQHNNQTRVQTCQNKAQVRSTRPQPSQVGSSRGQKNLKSYFQPSPSCPQ) shows a compositional bias: polar residues. The segment at 355-407 (STLQHNNQTRVQTCQNKAQVRSTRPQPSQVGSSRGQKNLKSYFQPSPSCPQAS) is disordered. Lysine 371 participates in a covalent cross-link: Glycyl lysine isopeptide (Lys-Gly) (interchain with G-Cter in ubiquitin). Residues 390–397 (QKNLKSYF) are required for the interaction and colocalization with PCNA in nuclear foci in presence of oxidative-induced DNA damaging agents. Cysteine 469, histidine 472, cysteine 495, and cysteine 509 together coordinate Zn(2+). The GRF-type zinc finger occupies 469–518 (CGGHREPCVMRTVKKPGPNLGRRFYMCARPRGPPTDPSSRCNFFLWSRPS).

The protein belongs to the DNA repair enzymes AP/ExoA family. In terms of assembly, interacts with PCNA; this interaction is triggered by reactive oxygen species and increased by misincorporation of uracil in nuclear DNA. Requires Mg(2+) as cofactor. It depends on Mn(2+) as a cofactor. Ubiquitinated by the CUL9-RBX1 complex. Ubiquitinated by MKRN3 at Lys-371 leading to proteasomal degradation. In terms of tissue distribution, highly expressed in brain and kidney. Weakly expressed in the fetal brain.

Its subcellular location is the nucleus. The protein resides in the cytoplasm. It localises to the mitochondrion. The catalysed reaction is Exonucleolytic cleavage in the 3'- to 5'-direction to yield nucleoside 5'-phosphates.. With respect to regulation, 3'-5' exonuclease activity is activated by sodium and manganese. 3'-5' exonuclease and 3'-phosphodiesterase activities are stimulated in presence of PCNA. Functionally, functions as a weak apurinic/apyrimidinic (AP) endodeoxyribonuclease in the DNA base excision repair (BER) pathway of DNA lesions induced by oxidative and alkylating agents. Initiates repair of AP sites in DNA by catalyzing hydrolytic incision of the phosphodiester backbone immediately adjacent to the damage, generating a single-strand break with 5'-deoxyribose phosphate and 3'-hydroxyl ends. Also displays double-stranded DNA 3'-5' exonuclease, 3'-phosphodiesterase activities. Shows robust 3'-5' exonuclease activity on 3'-recessed heteroduplex DNA and is able to remove mismatched nucleotides preferentially. Also exhibits 3'-5' exonuclease activity on a single nucleotide gap containing heteroduplex DNA and on blunt-ended substrates. Shows fairly strong 3'-phosphodiesterase activity involved in the removal of 3'-damaged termini formed in DNA by oxidative agents. In the nucleus functions in the PCNA-dependent BER pathway. Plays a role in reversing blocked 3' DNA ends, problematic lesions that preclude DNA synthesis. Required for somatic hypermutation (SHM) and DNA cleavage step of class switch recombination (CSR) of immunoglobulin genes. Required for proper cell cycle progression during proliferation of peripheral lymphocytes. In Homo sapiens (Human), this protein is DNA-(apurinic or apyrimidinic site) endonuclease 2 (APEX2).